The following is a 202-amino-acid chain: Peptide methionine sulfoxide reductase B2, chloroplastic (202 aa).

The N-terminal 63 residues, methionine 1–valine 63, are a transit peptide targeting the chloroplast. Positions glutamate 77–glutamate 198 constitute a MsrB domain. Zn(2+)-binding residues include cysteine 116, cysteine 119, cysteine 162, and cysteine 165. Cysteine 134 and cysteine 187 are joined by a disulfide. The Nucleophile role is filled by cysteine 187.

It belongs to the MsrB Met sulfoxide reductase family. The cofactor is Zn(2+). As to expression, expressed in stems, young leaves, floral buds and flowers. Expressed at low levels in roots, mature leaves and siliques (at protein level).

The protein resides in the plastid. Its subcellular location is the chloroplast. The catalysed reaction is L-methionyl-[protein] + [thioredoxin]-disulfide + H2O = L-methionyl-(R)-S-oxide-[protein] + [thioredoxin]-dithiol. Functionally, catalyzes the reduction of methionine sulfoxide (MetSO) to methionine in proteins. Specifically reduces the MetSO R-enantiomer. Plays a protective role against oxidative stress by restoring activity to proteins that have been inactivated by methionine oxidation. May play an essential function in association with MSRB1 in maintaining vegetative growth during environmental constraints, through the preservation of photosynthetic antennae. MSRB1 and MSRB2 account for most of the leaf peptide MSR capacity. The chain is Peptide methionine sulfoxide reductase B2, chloroplastic from Arabidopsis thaliana (Mouse-ear cress).